A 585-amino-acid chain; its full sequence is Aspartate--tRNA ligase (585 aa).

Glutamate 171 provides a ligand contact to L-aspartate. The aspartate stretch occupies residues 195-198 (QLFK). Residue arginine 217 coordinates L-aspartate. ATP-binding positions include 217–219 (RDE) and glutamine 226. Histidine 448 contributes to the L-aspartate binding site. Glutamate 482 lines the ATP pocket. An L-aspartate-binding site is contributed by arginine 489. 534–537 (GLDR) is an ATP binding site.

It belongs to the class-II aminoacyl-tRNA synthetase family. Type 1 subfamily. As to quaternary structure, homodimer.

The protein resides in the cytoplasm. It catalyses the reaction tRNA(Asp) + L-aspartate + ATP = L-aspartyl-tRNA(Asp) + AMP + diphosphate. Functionally, catalyzes the attachment of L-aspartate to tRNA(Asp) in a two-step reaction: L-aspartate is first activated by ATP to form Asp-AMP and then transferred to the acceptor end of tRNA(Asp). This Histophilus somni (strain 129Pt) (Haemophilus somnus) protein is Aspartate--tRNA ligase.